The following is a 347-amino-acid chain: Selenide, water dikinase (347 aa).

Cys17 is a catalytic residue. ATP is bound by residues Lys20 and 48–50 (TRD). Asp51 provides a ligand contact to Mg(2+). ATP is bound by residues Asp68, Asp91, and 139 to 141 (GHS). Asp91 contributes to the Mg(2+) binding site. Mg(2+) is bound at residue Asp227.

The protein belongs to the selenophosphate synthase 1 family. Class I subfamily. Homodimer. Requires Mg(2+) as cofactor.

It carries out the reaction hydrogenselenide + ATP + H2O = selenophosphate + AMP + phosphate + 2 H(+). Its function is as follows. Synthesizes selenophosphate from selenide and ATP. This chain is Selenide, water dikinase, found in Cronobacter sakazakii (strain ATCC BAA-894) (Enterobacter sakazakii).